The primary structure comprises 297 residues: tRNA dimethylallyltransferase (297 aa).

G15–S22 lines the ATP pocket. Residue T17–S22 coordinates substrate. Interaction with substrate tRNA regions lie at residues D40 to Q43 and Q164 to R168.

Belongs to the IPP transferase family. As to quaternary structure, monomer. Requires Mg(2+) as cofactor.

It carries out the reaction adenosine(37) in tRNA + dimethylallyl diphosphate = N(6)-dimethylallyladenosine(37) in tRNA + diphosphate. In terms of biological role, catalyzes the transfer of a dimethylallyl group onto the adenine at position 37 in tRNAs that read codons beginning with uridine, leading to the formation of N6-(dimethylallyl)adenosine (i(6)A). In Rhizobium etli (strain ATCC 51251 / DSM 11541 / JCM 21823 / NBRC 15573 / CFN 42), this protein is tRNA dimethylallyltransferase.